The primary structure comprises 224 residues: Holliday junction branch migration complex subunit RuvA (224 aa).

Positions 1–67 are domain I; the sequence is MISWLKGEKV…EDGTSLYGFI (67 aa). A domain II region spans residues 68–146; that stretch reads EVNQRDLFRE…RFTDNDKTIH (79 aa). Positions 147–155 are flexible linker; sequence ENKKGIEAN. A domain III region spans residues 156-224; that stretch reads QFSKYIDEIY…ILMKLSEKTT (69 aa).

It belongs to the RuvA family. In terms of assembly, homotetramer. Forms an RuvA(8)-RuvB(12)-Holliday junction (HJ) complex. HJ DNA is sandwiched between 2 RuvA tetramers; dsDNA enters through RuvA and exits via RuvB. An RuvB hexamer assembles on each DNA strand where it exits the tetramer. Each RuvB hexamer is contacted by two RuvA subunits (via domain III) on 2 adjacent RuvB subunits; this complex drives branch migration. In the full resolvosome a probable DNA-RuvA(4)-RuvB(12)-RuvC(2) complex forms which resolves the HJ.

Its subcellular location is the cytoplasm. Its function is as follows. The RuvA-RuvB-RuvC complex processes Holliday junction (HJ) DNA during genetic recombination and DNA repair, while the RuvA-RuvB complex plays an important role in the rescue of blocked DNA replication forks via replication fork reversal (RFR). RuvA specifically binds to HJ cruciform DNA, conferring on it an open structure. The RuvB hexamer acts as an ATP-dependent pump, pulling dsDNA into and through the RuvAB complex. HJ branch migration allows RuvC to scan DNA until it finds its consensus sequence, where it cleaves and resolves the cruciform DNA. The polypeptide is Holliday junction branch migration complex subunit RuvA (Prochlorococcus marinus (strain NATL1A)).